A 535-amino-acid polypeptide reads, in one-letter code: Atrial natriuretic peptide receptor 3 (535 aa).

The N-terminal stretch at 1–26 (MRSLLLFTFSACVLLARALLAGGASS) is a signal peptide. The propeptide occupies 27–40 (GGGDTGPGNRRRER). Residues 41-477 (EALAAQKIEV…CKSCGLEESA (437 aa)) lie on the Extracellular side of the membrane. Asn-81 carries N-linked (GlcNAc...) asparagine glycosylation. 2 disulfide bridges follow: Cys-103-Cys-131 and Cys-208-Cys-256. Asn-288 and Asn-389 each carry an N-linked (GlcNAc...) asparagine glycan. The helical transmembrane segment at 478–498 (VTGIVVGALLGAGLLMAFYFF) threads the bilayer. Residues 499–535 (RKKYRITIERRNHQEESNIGKHRELREDSIRSHFSVA) lie on the Cytoplasmic side of the membrane.

This sequence belongs to the ANF receptor family. In terms of assembly, homodimer; disulfide-linked. Interacts with OSTN.

It is found in the cell membrane. Functionally, receptor for the natriuretic peptide hormones, binding with similar affinities atrial natriuretic peptide NPPA/ANP, brain natriuretic peptide NPPB/BNP, and C-type natriuretic peptide NPPC/CNP. May function as a clearance receptor for NPPA, NPPB and NPPC, regulating their local concentrations and effects. Acts as a regulator of osteoblast differentiation and bone growth by binding to its ligand osteocrin, thereby preventing binding between NPR3/NPR-C and natriuretic peptides, leading to increase cGMP production. This is Atrial natriuretic peptide receptor 3 (Npr3) from Rattus norvegicus (Rat).